Consider the following 216-residue polypeptide: Uracil phosphoribosyltransferase (216 aa).

Residues R85, R110, and 135-143 (DPMVATGYS) each bind 5-phospho-alpha-D-ribose 1-diphosphate. Residues I200 and 205–207 (GDA) each bind uracil. Position 206 (D206) interacts with 5-phospho-alpha-D-ribose 1-diphosphate.

The protein belongs to the UPRTase family. It depends on Mg(2+) as a cofactor.

The enzyme catalyses UMP + diphosphate = 5-phospho-alpha-D-ribose 1-diphosphate + uracil. It participates in pyrimidine metabolism; UMP biosynthesis via salvage pathway; UMP from uracil: step 1/1. Allosterically activated by GTP. Functionally, catalyzes the conversion of uracil and 5-phospho-alpha-D-ribose 1-diphosphate (PRPP) to UMP and diphosphate. The sequence is that of Uracil phosphoribosyltransferase from Burkholderia lata (strain ATCC 17760 / DSM 23089 / LMG 22485 / NCIMB 9086 / R18194 / 383).